Consider the following 299-residue polypeptide: Protoheme IX farnesyltransferase 1 (299 aa).

9 consecutive transmembrane segments (helical) span residues 24-44 (VVAL…PGVP), 46-66 (AAVV…AAMV), 97-117 (LLVA…CCNA), 118-138 (LTAW…TLLL), 146-166 (IVIG…AVNG), 170-190 (AFAL…FWAL), 217-237 (LSIV…VALG), 239-259 (AGAI…FLAV), and 278-298 (IWYL…LIPL).

Belongs to the UbiA prenyltransferase family. Protoheme IX farnesyltransferase subfamily.

The protein localises to the cell inner membrane. The catalysed reaction is heme b + (2E,6E)-farnesyl diphosphate + H2O = Fe(II)-heme o + diphosphate. The protein operates within porphyrin-containing compound metabolism; heme O biosynthesis; heme O from protoheme: step 1/1. In terms of biological role, converts heme B (protoheme IX) to heme O by substitution of the vinyl group on carbon 2 of heme B porphyrin ring with a hydroxyethyl farnesyl side group. This chain is Protoheme IX farnesyltransferase 1, found in Chromobacterium violaceum (strain ATCC 12472 / DSM 30191 / JCM 1249 / CCUG 213 / NBRC 12614 / NCIMB 9131 / NCTC 9757 / MK).